The following is a 555-amino-acid chain: DNA ligase (555 aa).

Glu-247 provides a ligand contact to ATP. The active-site N6-AMP-lysine intermediate is the Lys-249. Residues Arg-254, Arg-269, Glu-298, Phe-337, Arg-411, and Lys-417 each coordinate ATP.

Belongs to the ATP-dependent DNA ligase family. Requires Mg(2+) as cofactor.

The enzyme catalyses ATP + (deoxyribonucleotide)n-3'-hydroxyl + 5'-phospho-(deoxyribonucleotide)m = (deoxyribonucleotide)n+m + AMP + diphosphate.. Functionally, DNA ligase that seals nicks in double-stranded DNA during DNA replication, DNA recombination and DNA repair. The chain is DNA ligase from Archaeoglobus fulgidus (strain ATCC 49558 / DSM 4304 / JCM 9628 / NBRC 100126 / VC-16).